Reading from the N-terminus, the 434-residue chain is Probable transcription factor HMS1 (434 aa).

In terms of domain architecture, bHLH spans T266 to L341. The tract at residues H365–F434 is disordered. Composition is skewed to polar residues over residues E368–V382 and P402–S423.

In terms of assembly, interacts with the G1/S-specific cyclin PCL1. Phosphorylated by the cyclin-CDK complex PCL1-PHO85.

The protein localises to the nucleus. In terms of biological role, involved in exit from mitosis and pseudohyphal differentiation. The chain is Probable transcription factor HMS1 (HMS1) from Saccharomyces cerevisiae (strain ATCC 204508 / S288c) (Baker's yeast).